We begin with the raw amino-acid sequence, 85 residues long: RNA-binding protein Hfq (85 aa).

The region spanning 10–70 (DIFLNGARKN…ISTINPAKPL (61 aa)) is the Sm domain.

Belongs to the Hfq family. In terms of assembly, homohexamer.

Its function is as follows. RNA chaperone that binds small regulatory RNA (sRNAs) and mRNAs to facilitate mRNA translational regulation in response to envelope stress, environmental stress and changes in metabolite concentrations. Also binds with high specificity to tRNAs. The sequence is that of RNA-binding protein Hfq from Clostridium botulinum (strain 657 / Type Ba4).